The chain runs to 717 residues: Polyribonucleotide nucleotidyltransferase (717 aa).

Residues Asp-496 and Asp-502 each contribute to the Mg(2+) site. The 60-residue stretch at 563 to 622 folds into the KH domain; that stretch reads PRLLSFKIDPEMIGLVIGPGGKTIKGITEETGVKIDIDDDGTVTIAAADGEKAKQACNII. The S1 motif domain occupies 632-700; that stretch reads GDVYVGRVTR…SKGRVNLTRL (69 aa).

It belongs to the polyribonucleotide nucleotidyltransferase family. It depends on Mg(2+) as a cofactor.

It is found in the cytoplasm. The enzyme catalyses RNA(n+1) + phosphate = RNA(n) + a ribonucleoside 5'-diphosphate. Functionally, involved in mRNA degradation. Catalyzes the phosphorolysis of single-stranded polyribonucleotides processively in the 3'- to 5'-direction. The chain is Polyribonucleotide nucleotidyltransferase from Trichodesmium erythraeum (strain IMS101).